We begin with the raw amino-acid sequence, 579 residues long: MAAKSDGAAASAGPDPEGAAGGARGSAGGRGEAAAAAGPPGVVGAGGPGPRYELRDCCWVLCALLVFFSDGATDLWLAASYYLQNQHTYFSLTLLFVLLPSLVVQLLSFRWFVYDYSEPAGSPGPAVSTKDSVAGGAAISTKDSAGAFRTKEGSPEPGPQPAPSSASAYRRRCCRLCIWLLQTLVHLLQLGQVWRYLRALYLGLQSRWRGERLRRHFYWQMLFESADVSMLRLLETFLRSAPQLVLQLSLLVHRGGAPDLLPALSTSASLVSLAWTLASYQKVLRDSRDDKRPLSYKGAVAQVLWHLFSIAARGLAFALFASVYKLYFGICIVGHWSVMTFWVIQGETDFCMSKGEEIIYNMVVGIIYIFCWFNVKEGRSRRRMTLYHCIVLLENAALTGFWYSSRNFSTDFYSLIMVCVVASSFALGIFFMCVYYCLLHPNGPMLGPQAPGCIFRKASEPCGPPADAITSPPRSLPRTTGAERDGASAGERAGTPTPPVFQVRPGLPPTPVARTLRTEGPVIRIDLPRKKYPAWDAHFIDRRLRKTILALEYSSPATPRLQYRSVGTSQELLEYETTV.

Residues 1–18 are compositionally biased toward low complexity; that stretch reads MAAKSDGAAASAGPDPEG. A disordered region spans residues 1-40; sequence MAAKSDGAAASAGPDPEGAAGGARGSAGGRGEAAAAAGPP. Residues 19 to 31 are compositionally biased toward gly residues; the sequence is AAGGARGSAGGRG. A run of 2 helical transmembrane segments spans residues 59-79 and 89-109; these read WVLC…WLAA and YFSL…LLSF. The interval 146-165 is disordered; that stretch reads GAFRTKEGSPEPGPQPAPSS. A run of 5 helical transmembrane segments spans residues 260 to 280, 314 to 334, 355 to 375, 384 to 404, and 415 to 435; these read LLPA…LASY, GLAF…CIVG, GEEI…WFNV, MTLY…FWYS, and LIMV…MCVY. A disordered region spans residues 466–510; it reads ADAITSPPRSLPRTTGAERDGASAGERAGTPTPPVFQVRPGLPPT.

Belongs to the XK family.

It is found in the cell membrane. In Pan troglodytes (Chimpanzee), this protein is XK-related protein 7 (XKR7).